Consider the following 489-residue polypeptide: 2-(3-amino-3-carboxypropyl)histidine synthase subunit 2 (489 aa).

Methionine 1 carries the N-acetylmethionine modification. Serine 7 carries the post-translational modification Phosphoserine. Positions 89, 110, and 341 each coordinate [4Fe-4S] cluster. The residue at position 435 (threonine 435) is a Phosphothreonine. Phosphoserine is present on residues serine 446 and serine 456. Threonine 467 is modified (phosphothreonine). A Phosphoserine modification is found at serine 488.

Belongs to the DPH1/DPH2 family. DPH2 subfamily. Component of the 2-(3-amino-3-carboxypropyl)histidine synthase complex composed of DPH1, DPH2, DPH3 and a NADH-dependent reductase. Interacts with DPH1. The cofactor is [4Fe-4S] cluster. In terms of tissue distribution, strongly expressed in skeletal muscle. Moderately expressed in heart, small intestine, liver, pancreas, testis and colon. Weakly expressed in brain, placenta, kidney, spleen, thymus, prostate, ovary and lymphocytes.

The protein operates within protein modification; peptidyl-diphthamide biosynthesis. Functionally, required for the first step of diphthamide biosynthesis, a post-translational modification of histidine which occurs in elongation factor 2. DPH1 and DPH2 transfer a 3-amino-3-carboxypropyl (ACP) group from S-adenosyl-L-methionine (SAM) to a histidine residue, the reaction is assisted by a reduction system comprising DPH3 and a NADH-dependent reductase. Facilitates the reduction of the catalytic iron-sulfur cluster found in the DPH1 subunit. This is 2-(3-amino-3-carboxypropyl)histidine synthase subunit 2 (DPH2) from Homo sapiens (Human).